A 344-amino-acid chain; its full sequence is Cyclin-G2 (344 aa).

Residues 298-324 (CFDGSESEDSGEDMSCGEESLSSSPPS) form a disordered region. Residues 302-313 (SESEDSGEDMSC) are compositionally biased toward acidic residues.

This sequence belongs to the cyclin family. Cyclin G subfamily. Highest levels in intestine. Intermediate levels in spleen, brain and kidney. Low levels in testis, stomach, pancreas, liver, salivary gland and muscle. According to PubMed:9139721 also abundant in thymus.

Its subcellular location is the cytoplasm. It is found in the nucleus. Its function is as follows. May play a role in growth regulation and in negative regulation of cell cycle progression. This chain is Cyclin-G2 (Ccng2), found in Mus musculus (Mouse).